Here is a 429-residue protein sequence, read N- to C-terminus: Serine--tRNA ligase (429 aa).

An L-serine-binding site is contributed by 229–231 (TAE). Position 260-262 (260-262 (RSE)) interacts with ATP. An L-serine-binding site is contributed by glutamate 283. 347–350 (EISS) contacts ATP. Residue serine 383 participates in L-serine binding.

Belongs to the class-II aminoacyl-tRNA synthetase family. Type-1 seryl-tRNA synthetase subfamily. In terms of assembly, homodimer. The tRNA molecule binds across the dimer.

The protein resides in the cytoplasm. The catalysed reaction is tRNA(Ser) + L-serine + ATP = L-seryl-tRNA(Ser) + AMP + diphosphate + H(+). It carries out the reaction tRNA(Sec) + L-serine + ATP = L-seryl-tRNA(Sec) + AMP + diphosphate + H(+). The protein operates within aminoacyl-tRNA biosynthesis; selenocysteinyl-tRNA(Sec) biosynthesis; L-seryl-tRNA(Sec) from L-serine and tRNA(Sec): step 1/1. In terms of biological role, catalyzes the attachment of serine to tRNA(Ser). Is also able to aminoacylate tRNA(Sec) with serine, to form the misacylated tRNA L-seryl-tRNA(Sec), which will be further converted into selenocysteinyl-tRNA(Sec). In Orientia tsutsugamushi (strain Ikeda) (Rickettsia tsutsugamushi), this protein is Serine--tRNA ligase.